Reading from the N-terminus, the 293-residue chain is Glycine--tRNA ligase alpha subunit (293 aa).

Belongs to the class-II aminoacyl-tRNA synthetase family. As to quaternary structure, tetramer of two alpha and two beta subunits.

It localises to the cytoplasm. It carries out the reaction tRNA(Gly) + glycine + ATP = glycyl-tRNA(Gly) + AMP + diphosphate. The sequence is that of Glycine--tRNA ligase alpha subunit from Sulfurimonas denitrificans (strain ATCC 33889 / DSM 1251) (Thiomicrospira denitrificans (strain ATCC 33889 / DSM 1251)).